A 79-amino-acid chain; its full sequence is RNA-binding protein Hfq (79 aa).

The 61-residue stretch at 10-70 folds into the Sm domain; it reads DAFLNHVRKT…ISTIMPAQPI (61 aa).

It belongs to the Hfq family. As to quaternary structure, homohexamer.

RNA chaperone that binds small regulatory RNA (sRNAs) and mRNAs to facilitate mRNA translational regulation in response to envelope stress, environmental stress and changes in metabolite concentrations. Also binds with high specificity to tRNAs. This is RNA-binding protein Hfq from Ruegeria pomeroyi (strain ATCC 700808 / DSM 15171 / DSS-3) (Silicibacter pomeroyi).